Consider the following 225-residue polypeptide: Uridylate kinase (225 aa).

9 to 10 (GS) provides a ligand contact to ATP. Position 46 (G46) interacts with UMP. ATP-binding residues include G47 and R51. UMP contacts are provided by residues D67 and 115–121 (THPAHTT). ATP-binding residues include T141, N142, Y147, and D150.

It belongs to the UMP kinase family. In terms of assembly, homohexamer.

It is found in the cytoplasm. It carries out the reaction UMP + ATP = UDP + ADP. Its pathway is pyrimidine metabolism; CTP biosynthesis via de novo pathway; UDP from UMP (UMPK route): step 1/1. With respect to regulation, inhibited by UTP. Catalyzes the reversible phosphorylation of UMP to UDP. This is Uridylate kinase from Methanococcus vannielii (strain ATCC 35089 / DSM 1224 / JCM 13029 / OCM 148 / SB).